A 128-amino-acid chain; its full sequence is Sulfurtransferase TusD (128 aa).

Cys-78 (cysteine persulfide intermediate) is an active-site residue.

This sequence belongs to the DsrE/TusD family. Heterohexamer, formed by a dimer of trimers. The hexameric TusBCD complex contains 2 copies each of TusB, TusC and TusD. The TusBCD complex interacts with TusE.

It localises to the cytoplasm. Part of a sulfur-relay system required for 2-thiolation of 5-methylaminomethyl-2-thiouridine (mnm(5)s(2)U) at tRNA wobble positions. Accepts sulfur from TusA and transfers it in turn to TusE. The polypeptide is Sulfurtransferase TusD (Escherichia coli (strain 55989 / EAEC)).